Consider the following 146-residue polypeptide: 1,4-dihydroxy-2-naphthoyl-CoA hydrolase (146 aa).

The active site involves aspartate 19.

This sequence belongs to the 4-hydroxybenzoyl-CoA thioesterase family. DHNA-CoA hydrolase subfamily.

It catalyses the reaction 1,4-dihydroxy-2-naphthoyl-CoA + H2O = 1,4-dihydroxy-2-naphthoate + CoA + H(+). It participates in cofactor biosynthesis; phylloquinone biosynthesis. It functions in the pathway quinol/quinone metabolism; 1,4-dihydroxy-2-naphthoate biosynthesis; 1,4-dihydroxy-2-naphthoate from chorismate: step 7/7. Catalyzes the hydrolysis of 1,4-dihydroxy-2-naphthoyl-CoA (DHNA-CoA) to 1,4-dihydroxy-2-naphthoate (DHNA), a reaction involved in phylloquinone (vitamin K1) biosynthesis. This chain is 1,4-dihydroxy-2-naphthoyl-CoA hydrolase, found in Thermosynechococcus vestitus (strain NIES-2133 / IAM M-273 / BP-1).